The sequence spans 348 residues: Aspartate carbamoyltransferase catalytic subunit (348 aa).

The carbamoyl phosphate site is built by Arg59 and Thr60. L-aspartate is bound at residue Lys87. Residues Arg109, His142, and Gln145 each contribute to the carbamoyl phosphate site. L-aspartate is bound by residues Arg182 and Arg253. Residues Gly294 and Pro295 each coordinate carbamoyl phosphate.

Belongs to the aspartate/ornithine carbamoyltransferase superfamily. ATCase family. In terms of assembly, heterododecamer (2C3:3R2) of six catalytic PyrB chains organized as two trimers (C3), and six regulatory PyrI chains organized as three dimers (R2).

The enzyme catalyses carbamoyl phosphate + L-aspartate = N-carbamoyl-L-aspartate + phosphate + H(+). The protein operates within pyrimidine metabolism; UMP biosynthesis via de novo pathway; (S)-dihydroorotate from bicarbonate: step 2/3. In terms of biological role, catalyzes the condensation of carbamoyl phosphate and aspartate to form carbamoyl aspartate and inorganic phosphate, the committed step in the de novo pyrimidine nucleotide biosynthesis pathway. This is Aspartate carbamoyltransferase catalytic subunit from Prochlorococcus marinus (strain MIT 9303).